A 466-amino-acid polypeptide reads, in one-letter code: Cysteine--tRNA ligase (466 aa).

Zn(2+) is bound at residue cysteine 29. Positions 31–41 (PTVYNYIHIGN) match the 'HIGH' region motif. Residues cysteine 209, histidine 234, and glutamate 238 each coordinate Zn(2+). A 'KMSKS' region motif is present at residues 266–270 (KMSKS). Lysine 269 is an ATP binding site. Serine 270 is modified (phosphoserine).

Belongs to the class-I aminoacyl-tRNA synthetase family. Monomer. Requires Zn(2+) as cofactor.

It localises to the cytoplasm. The enzyme catalyses tRNA(Cys) + L-cysteine + ATP = L-cysteinyl-tRNA(Cys) + AMP + diphosphate. The sequence is that of Cysteine--tRNA ligase (cysS) from Halalkalibacterium halodurans (strain ATCC BAA-125 / DSM 18197 / FERM 7344 / JCM 9153 / C-125) (Bacillus halodurans).